A 200-amino-acid chain; its full sequence is Dephospho-CoA kinase (200 aa).

Residues 3 to 200 (VLGLTGSIGM…LSGKPAAATR (198 aa)) enclose the DPCK domain. 11-16 (GMGKTT) contacts ATP.

It belongs to the CoaE family.

The protein resides in the cytoplasm. The catalysed reaction is 3'-dephospho-CoA + ATP = ADP + CoA + H(+). It participates in cofactor biosynthesis; coenzyme A biosynthesis; CoA from (R)-pantothenate: step 5/5. Functionally, catalyzes the phosphorylation of the 3'-hydroxyl group of dephosphocoenzyme A to form coenzyme A. The polypeptide is Dephospho-CoA kinase (Brucella abortus (strain 2308)).